The chain runs to 445 residues: Trimethylamine monooxygenase (445 aa).

Positions 14, 39, 41, 47, 48, and 64 each coordinate FAD. Positions 72 and 74 each coordinate NADP(+). The FAD site is built by Asn74 and Val127. Thr204, Ser205, Ser207, and Arg228 together coordinate NADP(+). Residues Gln317 and Thr320 each contribute to the FAD site. Arg411 contributes to the NADP(+) binding site.

Belongs to the FMO family. Requires FAD as cofactor.

It carries out the reaction trimethylamine + NADPH + O2 = trimethylamine N-oxide + NADP(+) + H2O. Its function is as follows. Catalyzes the oxidation of trimethylamine (TMA) to produce trimethylamine N-oxide (TMAO). In vitro, has a broad substrate specificity, oxidizing many nitrogen- and sulfur-containing compounds, including dimethylamine (DMA), dimethylsulfide (DMS) and dimethylsulfoxide (DMSO). The chain is Trimethylamine monooxygenase from Roseovarius sp. (strain 217).